A 264-amino-acid chain; its full sequence is MENWYAEIITIGNEILSGKTINTNASHIARRILSLGYVVRRITTVMDDIEEISLVFKEAINRKPKLIISTGGLGPTYDDKTSEGLALALGVSFEINKDAYEMIVEKYKKRGLPLTEERVKMAKMPAGAAPVRNDEGIAPGIYILHKDIEILATPGVPREMENVLENFIKYHLKNRPNISYYENSFLLLGVMESTIAPYVKELVKKYNLYIKTHPRSKEMDKPELEVQVAGSSTDKEEITRIVNECINELKQIGTRLGGRVQEIM.

Belongs to the CinA family.

The polypeptide is Protein Saci_1508 (Sulfolobus acidocaldarius (strain ATCC 33909 / DSM 639 / JCM 8929 / NBRC 15157 / NCIMB 11770)).